The primary structure comprises 583 residues: Propane 2-monooxygenase operon transcriptional activator MimR (583 aa).

In terms of domain architecture, Sigma-54 factor interaction spans Leu320 to Arg513. ATP contacts are provided by residues Glu349–Tyr356 and Ser395–Asp404.

Functionally, acts as a transcriptional activator of the mimABCD operon encoding the propane 2-monooxygenase complex. In Mycolicibacterium smegmatis (strain ATCC 700084 / mc(2)155) (Mycobacterium smegmatis), this protein is Propane 2-monooxygenase operon transcriptional activator MimR.